We begin with the raw amino-acid sequence, 536 residues long: Mitogen-activated protein kinase kinase kinase mom-4 (536 aa).

The segment covering 1 to 20 has biased composition (low complexity); it reads MDNSSQSKPSSSSSSHSPSP. A disordered region spans residues 1–34; sequence MDNSSQSKPSSSSSSHSPSPAAITPTQRTTRDSG. Positions 51 to 305 constitute a Protein kinase domain; that stretch reads NLNSHYLGKG…SSECVEYFTL (255 aa). ATP-binding positions include 57–65 and K84; that span reads LGKGTYGLV. Residue D176 is the Proton acceptor of the active site. Residues 314–438 are disordered; that stretch reads SVPLSDSSTN…EHRRDSNDEE (125 aa). Composition is skewed to polar residues over residues 315-325 and 350-366; these read VPLSDSSTNGP and NNRT…QQPG. Positions 405-438 are enriched in basic and acidic residues; that stretch reads KNFRDRAKSEQRQPHRDARPPPPFEHRRDSNDEE.

The protein belongs to the protein kinase superfamily. STE Ser/Thr protein kinase family. MAP kinase kinase kinase subfamily. In terms of assembly, interacts with, and is activated by, tap-1. Mg(2+) serves as cofactor. Post-translationally, may be autophosphorylated.

The enzyme catalyses L-seryl-[protein] + ATP = O-phospho-L-seryl-[protein] + ADP + H(+). The catalysed reaction is L-threonyl-[protein] + ATP = O-phospho-L-threonyl-[protein] + ADP + H(+). Its function is as follows. Part of the Wnt signaling pathway essential for the specification of the mesodermal cell fate in early embryos. Stimulates the wrm-1/lit-1-dependent phosphorylation of pop-1 and plays a role in the initial nuclear accumulation of wrm-1. This chain is Mitogen-activated protein kinase kinase kinase mom-4, found in Caenorhabditis elegans.